The sequence spans 267 residues: Small ribosomal subunit protein uS2 (267 aa).

Residues 222 to 267 (GKALRDQDSEEEIQNKEQDEVSQEEKDDILDEAMNEEDFEIPEDKE) are disordered. Over residues 223–240 (KALRDQDSEEEIQNKEQD) the composition is skewed to basic and acidic residues. Residues 241–267 (EVSQEEKDDILDEAMNEEDFEIPEDKE) show a composition bias toward acidic residues.

Belongs to the universal ribosomal protein uS2 family.

The protein is Small ribosomal subunit protein uS2 of Campylobacter hominis (strain ATCC BAA-381 / DSM 21671 / CCUG 45161 / LMG 19568 / NCTC 13146 / CH001A).